The sequence spans 156 residues: Small ribosomal subunit protein uS7 (156 aa).

The protein belongs to the universal ribosomal protein uS7 family. Part of the 30S ribosomal subunit. Contacts proteins S9 and S11.

Functionally, one of the primary rRNA binding proteins, it binds directly to 16S rRNA where it nucleates assembly of the head domain of the 30S subunit. Is located at the subunit interface close to the decoding center, probably blocks exit of the E-site tRNA. The sequence is that of Small ribosomal subunit protein uS7 from Shewanella sp. (strain W3-18-1).